We begin with the raw amino-acid sequence, 292 residues long: Formamidopyrimidine-DNA glycosylase (292 aa).

The Schiff-base intermediate with DNA role is filled by Pro-2. Glu-3 (proton donor) is an active-site residue. Lys-61 (proton donor; for beta-elimination activity) is an active-site residue. DNA is bound by residues His-103, Arg-122, and Lys-168. Residues 254 to 288 (DAYGREGEHCRRCGAVMRREKFMNRSSFYCPRCQP) form an FPG-type zinc finger. Catalysis depends on Arg-278, which acts as the Proton donor; for delta-elimination activity.

Belongs to the FPG family. In terms of assembly, monomer. It depends on Zn(2+) as a cofactor.

It carries out the reaction Hydrolysis of DNA containing ring-opened 7-methylguanine residues, releasing 2,6-diamino-4-hydroxy-5-(N-methyl)formamidopyrimidine.. The catalysed reaction is 2'-deoxyribonucleotide-(2'-deoxyribose 5'-phosphate)-2'-deoxyribonucleotide-DNA = a 3'-end 2'-deoxyribonucleotide-(2,3-dehydro-2,3-deoxyribose 5'-phosphate)-DNA + a 5'-end 5'-phospho-2'-deoxyribonucleoside-DNA + H(+). Functionally, involved in base excision repair of DNA damaged by oxidation or by mutagenic agents. Acts as a DNA glycosylase that recognizes and removes damaged bases. Has a preference for oxidized purines, such as 7,8-dihydro-8-oxoguanine (8-oxoG). Has AP (apurinic/apyrimidinic) lyase activity and introduces nicks in the DNA strand. Cleaves the DNA backbone by beta-delta elimination to generate a single-strand break at the site of the removed base with both 3'- and 5'-phosphates. The protein is Formamidopyrimidine-DNA glycosylase of Mycobacterium ulcerans (strain Agy99).